Consider the following 591-residue polypeptide: Aspartate--tRNA(Asp/Asn) ligase (591 aa).

Glu176 lines the L-aspartate pocket. The interval 200–203 (QLFK) is aspartate. Arg222 lines the L-aspartate pocket. ATP-binding positions include 222-224 (RDE) and Gln231. His450 contributes to the L-aspartate binding site. Glu484 contacts ATP. Residue Arg491 participates in L-aspartate binding. 536–539 (GLDR) serves as a coordination point for ATP.

Belongs to the class-II aminoacyl-tRNA synthetase family. Type 1 subfamily. Homodimer.

It is found in the cytoplasm. It catalyses the reaction tRNA(Asx) + L-aspartate + ATP = L-aspartyl-tRNA(Asx) + AMP + diphosphate. Its function is as follows. Aspartyl-tRNA synthetase with relaxed tRNA specificity since it is able to aspartylate not only its cognate tRNA(Asp) but also tRNA(Asn). Reaction proceeds in two steps: L-aspartate is first activated by ATP to form Asp-AMP and then transferred to the acceptor end of tRNA(Asp/Asn). The polypeptide is Aspartate--tRNA(Asp/Asn) ligase (Bacillus thuringiensis (strain Al Hakam)).